We begin with the raw amino-acid sequence, 174 residues long: Crossover junction endodeoxyribonuclease RuvC (174 aa).

Active-site residues include Asp8, Glu67, and Asp139. Asp8, Glu67, and Asp139 together coordinate Mg(2+).

The protein belongs to the RuvC family. Homodimer which binds Holliday junction (HJ) DNA. The HJ becomes 2-fold symmetrical on binding to RuvC with unstacked arms; it has a different conformation from HJ DNA in complex with RuvA. In the full resolvosome a probable DNA-RuvA(4)-RuvB(12)-RuvC(2) complex forms which resolves the HJ. The cofactor is Mg(2+).

Its subcellular location is the cytoplasm. The catalysed reaction is Endonucleolytic cleavage at a junction such as a reciprocal single-stranded crossover between two homologous DNA duplexes (Holliday junction).. The RuvA-RuvB-RuvC complex processes Holliday junction (HJ) DNA during genetic recombination and DNA repair. Endonuclease that resolves HJ intermediates. Cleaves cruciform DNA by making single-stranded nicks across the HJ at symmetrical positions within the homologous arms, yielding a 5'-phosphate and a 3'-hydroxyl group; requires a central core of homology in the junction. The consensus cleavage sequence is 5'-(A/T)TT(C/G)-3'. Cleavage occurs on the 3'-side of the TT dinucleotide at the point of strand exchange. HJ branch migration catalyzed by RuvA-RuvB allows RuvC to scan DNA until it finds its consensus sequence, where it cleaves and resolves the cruciform DNA. This chain is Crossover junction endodeoxyribonuclease RuvC, found in Stutzerimonas stutzeri (strain A1501) (Pseudomonas stutzeri).